The primary structure comprises 284 residues: Acetylglutamate kinase (284 aa).

Substrate contacts are provided by residues 64 to 65 (GG), arginine 86, and asparagine 181.

It belongs to the acetylglutamate kinase family. ArgB subfamily.

The protein localises to the cytoplasm. The enzyme catalyses N-acetyl-L-glutamate + ATP = N-acetyl-L-glutamyl 5-phosphate + ADP. It participates in amino-acid biosynthesis; L-arginine biosynthesis; N(2)-acetyl-L-ornithine from L-glutamate: step 2/4. In terms of biological role, catalyzes the ATP-dependent phosphorylation of N-acetyl-L-glutamate. This is Acetylglutamate kinase from Nitratiruptor sp. (strain SB155-2).